We begin with the raw amino-acid sequence, 95 residues long: MNIRPLHDRVVIKRMEEERTSPGGIVIPDSAAEKPIKGEVVAVGNGKLLDNGETRPLDLKVGDKVLFGKFAGTEVKVDGEELLVMREDDVMAIVE.

The protein belongs to the GroES chaperonin family. As to quaternary structure, heptamer of 7 subunits arranged in a ring. Interacts with the chaperonin GroEL.

It is found in the cytoplasm. Its function is as follows. Together with the chaperonin GroEL, plays an essential role in assisting protein folding. The GroEL-GroES system forms a nano-cage that allows encapsulation of the non-native substrate proteins and provides a physical environment optimized to promote and accelerate protein folding. GroES binds to the apical surface of the GroEL ring, thereby capping the opening of the GroEL channel. This Alkalilimnicola ehrlichii (strain ATCC BAA-1101 / DSM 17681 / MLHE-1) protein is Co-chaperonin GroES.